The following is a 577-amino-acid chain: Sensor histidine kinase YesM (577 aa).

The Cytoplasmic portion of the chain corresponds to 1 to 17; sequence MKKRVAGWYRRMKIKDK. The chain crosses the membrane as a helical span at residues 18–38; it reads LFVFLSLIMAVSFLFVYSGVQ. The Extracellular segment spans residues 39 to 286; that stretch reads YAFHVYDEQI…PFDQMFAKIS (248 aa). A helical transmembrane segment spans residues 287–307; the sequence is FMKTVIGTCFLLFFCVVLLFG. The Cytoplasmic segment spans residues 308 to 577; sequence RKIANSITEP…ITIPCRNEVV (270 aa). The 57-residue stretch at 312-368 folds into the HAMP domain; it reads NSITEPIEQLVTAMKSVQHSGIEAGVSLSLPEHTQDEAGMLNRHFTVMMKRINELME. The region spanning 365-574 is the Histidine kinase domain; it reads ELMEENVEKQ…RIVITIPCRN (210 aa). His392 carries the post-translational modification Phosphohistidine; by autocatalysis.

Its subcellular location is the cell membrane. The catalysed reaction is ATP + protein L-histidine = ADP + protein N-phospho-L-histidine.. Member of the two-component regulatory system YesM/YesN. Probably activates YesN by phosphorylation. This Bacillus subtilis (strain 168) protein is Sensor histidine kinase YesM (yesM).